The sequence spans 481 residues: Aspartyl/glutamyl-tRNA(Asn/Gln) amidotransferase subunit B (481 aa).

The disordered stretch occupies residues 29 to 50 (SSSKSSHTDPKNTNISPIDLGH).

This sequence belongs to the GatB/GatE family. GatB subfamily. As to quaternary structure, heterotrimer of A, B and C subunits.

The catalysed reaction is L-glutamyl-tRNA(Gln) + L-glutamine + ATP + H2O = L-glutaminyl-tRNA(Gln) + L-glutamate + ADP + phosphate + H(+). It catalyses the reaction L-aspartyl-tRNA(Asn) + L-glutamine + ATP + H2O = L-asparaginyl-tRNA(Asn) + L-glutamate + ADP + phosphate + 2 H(+). In terms of biological role, allows the formation of correctly charged Asn-tRNA(Asn) or Gln-tRNA(Gln) through the transamidation of misacylated Asp-tRNA(Asn) or Glu-tRNA(Gln) in organisms which lack either or both of asparaginyl-tRNA or glutaminyl-tRNA synthetases. The reaction takes place in the presence of glutamine and ATP through an activated phospho-Asp-tRNA(Asn) or phospho-Glu-tRNA(Gln). This is Aspartyl/glutamyl-tRNA(Asn/Gln) amidotransferase subunit B from Malacoplasma penetrans (strain HF-2) (Mycoplasma penetrans).